The sequence spans 119 residues: Protein TusC (119 aa).

The protein belongs to the DsrF/TusC family. Heterohexamer, formed by a dimer of trimers. The hexameric TusBCD complex contains 2 copies each of TusB, TusC and TusD. The TusBCD complex interacts with TusE.

Its subcellular location is the cytoplasm. Part of a sulfur-relay system required for 2-thiolation of 5-methylaminomethyl-2-thiouridine (mnm(5)s(2)U) at tRNA wobble positions. This is Protein TusC from Pectobacterium atrosepticum (strain SCRI 1043 / ATCC BAA-672) (Erwinia carotovora subsp. atroseptica).